Reading from the N-terminus, the 663-residue chain is Polyunsaturated fatty acid lipoxygenase ALOX15 (663 aa).

One can recognise a PLAT domain in the interval 2–115 (GVYRIRVSTG…ILNLPEGTGC (114 aa)). Positions 116-663 (TVVEDSQGLF…PSLVENSVAI (548 aa)) constitute a Lipoxygenase domain. 5 residues coordinate Fe cation: H361, H366, H541, H545, and I663.

It belongs to the lipoxygenase family. In terms of assembly, interacts with PEBP1; in response to IL13/interleukin-13, prevents the interaction of PEBP1 with RAF1 to activate the ERK signaling cascade. Requires Fe cation as cofactor. As to expression, found in pituitary and pineal glands as well as leukocytes, kidney, aorta, small intestine and cornea. Also expressed by resident peritoneal macrophages (at protein level).

The protein localises to the cytoplasm. Its subcellular location is the cytosol. The protein resides in the cell membrane. It localises to the lipid droplet. It catalyses the reaction (5Z,8Z,11Z,14Z)-eicosatetraenoate + O2 = (12S)-hydroperoxy-(5Z,8Z,10E,14Z)-eicosatetraenoate. It carries out the reaction (5Z,8Z,11Z,14Z)-eicosatetraenoate + O2 = (15S)-hydroperoxy-(5Z,8Z,11Z,13E)-eicosatetraenoate. The enzyme catalyses (9Z,12Z)-octadecadienoate + O2 = (13S)-hydroperoxy-(9Z,11E)-octadecadienoate. The catalysed reaction is (5Z,8Z,11Z,14Z)-eicosatetraenoate + 2 O2 = (14R,15S)-dihydroperoxy-(5Z,8Z,10E,12E)-eicosatetraenoate. It catalyses the reaction (5Z,8Z,11Z,14Z)-eicosatetraenoate + 2 O2 = (8S,15S)-dihydroperoxy-(5Z,9E,11Z,13E)-eicosatetraenoate. It carries out the reaction (14S,15R)-epoxy-(5Z,8Z,11Z)-eicosatrienoate + O2 = (8S)-hydroperoxy-(14S,15R)-epoxy-(5Z,9E,11Z)-eicosatrienoate. The enzyme catalyses (14S,15R)-epoxy-(5Z,8Z,11Z)-eicosatrienoate + O2 = (12S)-hydroperoxy-(14S,15R)-epoxy-(5Z,8Z,10E)-eicosatrienoate. The catalysed reaction is (14R,15S)-epoxy-(5Z,8Z,11Z)-eicosatrienoate + O2 = (5S)-hydroperoxy-(14R,15S)-epoxy-(6E,8Z,11Z)-eicosatrienoate. It catalyses the reaction (14R,15S)-epoxy-(5Z,8Z,11Z)-eicosatrienoate + O2 = (12S)-hydroperoxy-(14R,15S)-epoxy-(5Z,8Z,10E)-eicosatrienoate. It carries out the reaction (15R)-hydroperoxy-(5Z,8Z,11Z,13E)-eicosatetraenoate = 15-oxo-(5Z,8Z,11Z,13E)-eicosatetraenoate + H2O. The enzyme catalyses (15S)-hydroperoxy-(5Z,8Z,11Z,13E)-eicosatetraenoate = (14S,15S)-epoxy-(5Z,8Z,10E,12E)-eicosatetraenoate + H2O. The catalysed reaction is (12S)-hydroperoxy-(5Z,8Z,10E,14Z)-eicosatetraenoate = (8S)-hydroxy-(11S,12S)-epoxy-(5Z,9E,14Z)-eicosatrienoate. It catalyses the reaction (4Z,7Z,10Z,13Z,16Z)-docosapentaenoate + O2 = 14-hydroperoxy-(4Z,7Z,10Z,12E,16Z)-docosapentaenoate. It carries out the reaction (7Z,10Z,13Z,16Z,19Z)-docosapentaenoate + O2 = 14-hydroperoxy-(7Z,10Z,12E,16Z,19Z)-docosapentaenoate. The enzyme catalyses (4Z,7Z,10Z,13Z,16Z,19Z)-docosahexaenoate + O2 = (14S)-hydroperoxy-(4Z,7Z,10Z,12E,16Z,19Z)-docosahexaenoate. The catalysed reaction is (4Z,7Z,10Z,13Z,16Z,19Z)-docosahexaenoate + O2 = (17S)-hydroperoxy-(4Z,7Z,10Z,13Z,15E,19Z)-docosahexaenoate. It catalyses the reaction (7S)-hydroperoxy-(4Z,8E,10Z,13Z,16Z,19Z)-docosahexaenoate + O2 = (7S,14S)-dihydroperoxy-(4Z,8E,10Z,12E,16Z,19Z)-docosahexaenoate. It carries out the reaction (7S)-hydroperoxy-(4Z,8E,10Z,13Z,16Z,19Z)-docosahexaenoate + O2 = (7S,17S)-dihydroperoxy-(4Z,8E,10Z,13Z,15E,19Z)-docosahexaenoate. The enzyme catalyses (4Z,7Z,10Z,13Z,16Z,19Z)-docosahexaenoate + O2 = (11S)-hydroperoxy-(4Z,7Z,9E,13Z,16Z,19Z)-docosahexaenoate. The catalysed reaction is N-(5Z,8Z,11Z,14Z)-eicosatetraenoyl-taurine + O2 = N-(12S)-hydroperoxy-(5Z,8Z,10E,14Z)-eicosatetraenoyl-taurine. It catalyses the reaction N-(5Z,8Z,11Z,14Z)-eicosatetraenoyl-gamma-aminobutanoate + O2 = N-(12S)-hydroperoxy-(5Z,8Z,10E,14Z)-eicosatetraenoyl-gamma-aminobutanoate. It carries out the reaction N-(5Z,8Z,11Z,14Z)-eicosatetraenoyl-glycine + O2 = N-(12S)-hydroperoxy-(5Z,8Z,10E,14Z)-eicosatetraenoyl-glycine. The enzyme catalyses N-(5Z,8Z,11Z,14Z)-eicosatetraenoyl-L-alanine + O2 = N-(12S)-hydroperoxy-(5Z,8Z,10E,14Z)-eicosatetraenoyl-alanine. The catalysed reaction is N-(5Z,8Z,11Z,14Z)-eicosatetraenoyl-taurine + O2 = N-(15S)-hydroperoxy-(5Z,8Z,11Z,13E)-eicosatetraenoyl-taurine. It catalyses the reaction N-(5Z,8Z,11Z,14Z)-eicosatetraenoyl-gamma-aminobutanoate + O2 = N-(15S)-hydroperoxy-(5Z,8Z,11Z,13E)-eicosatetraenoyl-gamma-aminobutanoate. It carries out the reaction N-(5Z,8Z,11Z,14Z)-eicosatetraenoyl-glycine + O2 = N-(15S)-hydroperoxy-(5Z,8Z,11Z,13E)-eicosatetraenoyl-glycine. The enzyme catalyses N-(5Z,8Z,11Z,14Z)-eicosatetraenoyl-L-alanine + O2 = N-(15S)-hydroperoxy-(5Z,8Z,11Z,13E)-eicosatetraenoyl-alanine. It participates in lipid metabolism; hydroperoxy eicosatetraenoic acid biosynthesis. In terms of biological role, non-heme iron-containing dioxygenase that catalyzes the stereo-specific peroxidation of free and esterified polyunsaturated fatty acids generating a spectrum of bioactive lipid mediators. It inserts peroxyl groups at C12 or C15 of arachidonate ((5Z,8Z,11Z,14Z)-eicosatetraenoate) producing both 12-hydroperoxyeicosatetraenoate/12-HPETE and 15-hydroperoxyeicosatetraenoate/15-HPETE. It may then act on 12-HPETE to produce hepoxilins, which may show pro-inflammatory properties. Can also peroxidize linoleate ((9Z,12Z)-octadecadienoate) to 13-hydroperoxyoctadecadienoate. May participate in the sequential oxidations of DHA ((4Z,7Z,10Z,13Z,16Z,19Z)-docosahexaenoate) to generate specialized pro-resolving mediators (SPMs)like resolvin D5 ((7S,17S)-diHPDHA) and (7S,14S)-diHPDHA, that actively down-regulate the immune response and have anti-aggregation properties with platelets. Can convert epoxy fatty acids to hydroperoxy-epoxides derivatives followed by an intramolecular nucleophilic substitution leading to the formation of monocyclic endoperoxides. Plays an important role during the maintenance of self-tolerance by peroxidizing membrane-bound phosphatidylethanolamine which can then signal the sorting process for clearance of apoptotic cells during inflammation and prevent an autoimmune response. In addition to its role in the immune and inflammatory responses, this enzyme may play a role in epithelial wound healing in the cornea through production of lipoxin A4 (LXA(4)) and docosahexaenoic acid-derived neuroprotectin D1 (NPD1; 10R,17S-HDHA), both lipid autacoids exhibit anti-inflammatory and neuroprotective properties. Furthermore, it may regulate actin polymerization which is crucial for several biological processes such as the phagocytosis of apoptotic cells. It is also implicated in the generation of endogenous ligands for peroxisome proliferator activated receptor (PPAR-gamma), hence modulating macrophage development and function. It may also exert a negative effect on skeletal development by regulating bone mass through this pathway. As well as participates in ER stress and downstream inflammation in adipocytes, pancreatic islets, and liver. Finally, it is also involved in the cellular response to IL13/interleukin-13. This Mus musculus (Mouse) protein is Polyunsaturated fatty acid lipoxygenase ALOX15.